The chain runs to 337 residues: DNA-directed RNA polymerase subunit alpha (337 aa).

An alpha N-terminal domain (alpha-NTD) region spans residues 1-233; it reads MIQKNWQELI…DQLSIFVNFE (233 aa). Positions 249–337 are alpha C-terminal domain (alpha-CTD); the sequence is FNPALLKKVD…DLAKRYEDQY (89 aa).

The protein belongs to the RNA polymerase alpha chain family. As to quaternary structure, homodimer. The RNAP catalytic core consists of 2 alpha, 1 beta, 1 beta' and 1 omega subunit. When a sigma factor is associated with the core the holoenzyme is formed, which can initiate transcription.

The catalysed reaction is RNA(n) + a ribonucleoside 5'-triphosphate = RNA(n+1) + diphosphate. Its function is as follows. DNA-dependent RNA polymerase catalyzes the transcription of DNA into RNA using the four ribonucleoside triphosphates as substrates. The protein is DNA-directed RNA polymerase subunit alpha of Brucella abortus (strain S19).